The primary structure comprises 607 residues: Pescadillo homolog (607 aa).

The region spanning 320–413 (KLKNLFKGLK…KLLPVNKYLI (94 aa)) is the BRCT domain. The tract at residues 486 to 607 (EALNSGALEE…KTQRKEILAK (122 aa)) is disordered. Acidic residues predominate over residues 495–511 (EAPEEEDDDEEAPEEDE). Basic and acidic residues predominate over residues 530–549 (IFKENPSEQKKLTKQEEALR). Positions 551–562 (RMVKSRHKKLYR) are enriched in basic residues. The segment covering 563–607 (KMLEKQKKQTKEANLLKEKRQQIDKKQRVEQTQKRKTQRKEILAK) has biased composition (basic and acidic residues).

This sequence belongs to the pescadillo family.

The protein resides in the nucleus. It is found in the nucleolus. The protein localises to the nucleoplasm. In terms of biological role, required for maturation of ribosomal RNAs and formation of the large ribosomal subunit. The polypeptide is Pescadillo homolog (Culex quinquefasciatus (Southern house mosquito)).